A 192-amino-acid polypeptide reads, in one-letter code: Xanthine phosphoribosyltransferase (192 aa).

2 residues coordinate xanthine: L20 and N27. Residue 128–132 (ANGDA) coordinates 5-phospho-alpha-D-ribose 1-diphosphate. Xanthine is bound at residue K156.

The protein belongs to the purine/pyrimidine phosphoribosyltransferase family. Xpt subfamily. As to quaternary structure, homodimer.

The protein localises to the cytoplasm. It catalyses the reaction XMP + diphosphate = xanthine + 5-phospho-alpha-D-ribose 1-diphosphate. It participates in purine metabolism; XMP biosynthesis via salvage pathway; XMP from xanthine: step 1/1. Converts the preformed base xanthine, a product of nucleic acid breakdown, to xanthosine 5'-monophosphate (XMP), so it can be reused for RNA or DNA synthesis. The protein is Xanthine phosphoribosyltransferase of Staphylococcus aureus (strain Mu3 / ATCC 700698).